The following is a 301-amino-acid chain: Zinc finger protein 346 (301 aa).

2 Matrin-type zinc fingers span residues Ser55–Arg85 and Lys117–His141. Zn(2+) is bound by residues Cys57, Cys60, His73, His79, Cys119, Cys122, His135, and His141. The interval Gly151 to Asp177 is disordered. 2 consecutive Matrin-type zinc fingers follow at residues Arg180–Lys210 and Tyr230–His257. The segment at Ser250 to Asn283 is disordered. The segment covering Gly251–Lys262 has biased composition (basic residues).

It is found in the nucleus. The protein localises to the cytoplasm. In terms of biological role, binds preferentially to dsRNA, but also to RNA-DNA hybrids. In Danio rerio (Zebrafish), this protein is Zinc finger protein 346.